The chain runs to 155 residues: Ribosomal RNA large subunit methyltransferase H (155 aa).

S-adenosyl-L-methionine-binding positions include glycine 104 and 123-128 (FGNITL).

The protein belongs to the RNA methyltransferase RlmH family. Homodimer.

It localises to the cytoplasm. It carries out the reaction pseudouridine(1915) in 23S rRNA + S-adenosyl-L-methionine = N(3)-methylpseudouridine(1915) in 23S rRNA + S-adenosyl-L-homocysteine + H(+). Its function is as follows. Specifically methylates the pseudouridine at position 1915 (m3Psi1915) in 23S rRNA. This Mesoplasma florum (strain ATCC 33453 / NBRC 100688 / NCTC 11704 / L1) (Acholeplasma florum) protein is Ribosomal RNA large subunit methyltransferase H.